A 90-amino-acid polypeptide reads, in one-letter code: Barrier-to-autointegration factor (90 aa).

2 positions are modified to phosphoserine: Ser-2 and Ser-3. The residue at position 4 (Thr-4) is a Phosphothreonine. The residue at position 5 (Ser-5) is a Phosphoserine.

This sequence belongs to the BAF family. Homodimer.

Its subcellular location is the nucleus. The protein resides in the chromosome. The protein localises to the nucleus envelope. It is found in the cytoplasm. Its function is as follows. Non-specific DNA-binding protein that plays key roles in mitotic nuclear reassembly, chromatin organization, DNA damage response, gene expression and intrinsic immunity against foreign DNA. Contains two non-specific double-stranded DNA (dsDNA)-binding sites which promote DNA cross-bridging. Plays a key role in nuclear membrane reformation at the end of mitosis by driving formation of a single nucleus in a spindle-independent manner. Transiently cross-bridges anaphase chromosomes via its ability to bridge distant DNA sites, leading to the formation of a dense chromatin network at the chromosome ensemble surface that limits membranes to the surface. Also acts as a negative regulator of innate immune activation by restricting CGAS activity toward self-DNA upon acute loss of nuclear membrane integrity. Outcompetes CGAS for DNA-binding, thereby preventing CGAS activation and subsequent damaging autoinflammatory responses. Also involved in DNA damage response; acts by inhibiting the ADP-ribosyltransferase activity of PARP1. Involved in the recognition of exogenous dsDNA in the cytosol: associates with exogenous dsDNA immediately after its appearance in the cytosol at endosome breakdown and is required to avoid autophagy. The sequence is that of Barrier-to-autointegration factor (banf1) from Danio rerio (Zebrafish).